A 1050-amino-acid chain; its full sequence is Ankyrin repeat domain-containing protein 27 (1050 aa).

Residues M1–P372 are sufficient for GEF activity towards RAB21. The 139-residue stretch at A233–P371 folds into the VPS9 domain. 6 ANK repeats span residues S396–T426, R462–A491, H495–V524, N528–I560, K564–I593, and L597–S627. The tract at residues S396–D460 is sufficient for interaction with VPS29. Positions P451–T600 are interaction with RAB38. The interval P451–V730 is interaction with RAB32. The segment at Q625–K665 is disordered. Polar residues predominate over residues S628–R637. The segment covering S638–S658 has biased composition (low complexity). The required for interaction with VAMP7 stretch occupies residues S658 to D707. ANK repeat units lie at residues R668–D698, D743–A772, D776–K805, S809–A838, and K842–V871. A sufficient for interaction with VPS29 region spans residues T692–S746. Phosphoserine is present on residues S962 and S970. Positions P987 to S1050 are disordered. The span at A994–E1004 shows a compositional bias: basic and acidic residues. The residue at position 1023 (T1023) is a Phosphothreonine. Residues S1040 to S1050 show a composition bias toward polar residues.

In terms of assembly, interacts with RAB21 (GDP-bound form), VPS29, RAB32 (GTP-bound form), RAB38 (GTP-bound form), VAMP7, KIF5A, KIF5C, GOLGA4. Interacts with low affinity with RAB5. ANKRD27:RAB32 heterodimers can homodimerize to form tetramers. Can interact with RAB38 or RAB32, VPS29 and VAMP7 simultaneously. A decreased interaction with RAB32 seen in the presence of SGSM2.

The protein resides in the early endosome. It is found in the late endosome. Its subcellular location is the cytoplasmic vesicle membrane. It localises to the lysosome. The protein localises to the cell membrane. The protein resides in the melanosome. Its function is as follows. May be a guanine exchange factor (GEF) for Rab21, Rab32 and Rab38 and regulate endosome dynamics. May regulate the participation of VAMP7 in membrane fusion events; in vitro inhibits VAMP7-mediated SNARE complex formation by trapping VAMP7 in a closed, fusogenically inactive conformation. Involved in peripheral melanosomal distribution of TYRP1 in melanocytes; the function, which probably is implicating vesicle-trafficking, includes cooperation with Rab32, Rab38 and VAMP7. Involved in the regulation of neurite growth; the function seems to require its GEF activity, probably towards Rab21, and VAMP7 but not Rab32/38. Proposed to be involved in Golgi sorting of VAMP7 and transport of VAMP7 vesicles to the cell surface; the function seems to implicate kinesin heavy chain isoform 5 proteins, GOLGA4, RAB21 and MACF1. Required for the colocalization of VAMP7 and Rab21, probably on TGN sites. Involved in GLUT1 endosome-to-plasma membrane trafficking; the function is dependent of association with VPS29. Regulates the proper trafficking of melanogenic enzymes TYR, TYRP1 and DCT/TYRP2 to melanosomes in melanocytes. In Homo sapiens (Human), this protein is Ankyrin repeat domain-containing protein 27 (ANKRD27).